The sequence spans 325 residues: Tagatose 1,6-diphosphate aldolase 1 (325 aa).

This sequence belongs to the aldolase LacD family.

The enzyme catalyses D-tagatofuranose 1,6-bisphosphate = D-glyceraldehyde 3-phosphate + dihydroxyacetone phosphate. It functions in the pathway carbohydrate metabolism; D-tagatose 6-phosphate degradation; D-glyceraldehyde 3-phosphate and glycerone phosphate from D-tagatose 6-phosphate: step 2/2. This chain is Tagatose 1,6-diphosphate aldolase 1 (lacD1), found in Streptococcus pyogenes serotype M3 (strain ATCC BAA-595 / MGAS315).